The chain runs to 94 residues: Small ubiquitin-related modifier 3 (94 aa).

Lysine 11 is covalently cross-linked (Glycyl lysine isopeptide (Lys-Gly) (interchain with G-Cter in SUMO)). The 78-residue stretch at 15–92 folds into the Ubiquitin-like domain; sequence DHINLKVAGQ…IDVFQQQTGG (78 aa). Glycine 92 is covalently cross-linked (Glycyl lysine isopeptide (Gly-Lys) (interchain with K-? in acceptor proteins)). A propeptide spanning residues 93-94 is cleaved from the precursor; it reads LC.

Belongs to the ubiquitin family. SUMO subfamily. Interacts with SAE2 and UBE2I. Covalently attached to a number of proteins. Post-translationally, polymeric chains can be formed through Lys-11 cross-linking. In terms of processing, cleavage of precursor form by a sentrin-specific protease is necessary for function.

It localises to the cytoplasm. The protein resides in the nucleus. The protein localises to the PML body. Its function is as follows. Ubiquitin-like protein which can be covalently attached to target lysines either as a monomer or as a lysine-linked polymer. Does not seem to be involved in protein degradation and may function as an antagonist of ubiquitin in the degradation process. Plays a role in a number of cellular processes such as nuclear transport, DNA replication and repair, mitosis and signal transduction. Covalent attachment to its substrates requires prior activation by the E1 complex SAE1-SAE2 and linkage to the E2 enzyme UBE2I. The chain is Small ubiquitin-related modifier 3 from Gallus gallus (Chicken).